Here is a 585-residue protein sequence, read N- to C-terminus: MSHPHSHSIYLSELPVRKPQALGNPLLRKIQRACRMSLAEPDLALNLDIADYINEKQGAAPRDAAIALAKLINNRESHVAIFALSLLDVLVKNCGYPFHLQISRKEFLNELVKRFPGHPPLRYSKIQRLILTAIEEWYQTICKHSSYKNDMGYIRDMHRLLKYKGYAFPKISESDLAVLKPSNQLKTASEIQKEQEIAQAAKLEELIRRGKPEDLREANKLMKIMAGFKEDNAVQAKQAISSELNKLKRKADLLNEMLESPDSQNWDNETTQELHSALKVAQPKFQKIIEEEQEDDALVQDLLKFNDTVNQLLEKFNLLKNGDSNAASQIHPSHVSAPLQQSSGALTNEINLIDFNDLDEAPSQGNNNTNGTGTPAAAETSVNDLLGDLTDLSISNPSTANQASFGLGGDIVLGSSQPAPPVTTTNNSNNTLDLLGLSTPQSPTNSQAVNSSGFDLLMGFNPTTGTTTAPARTLVNQSPNLKIEFEISRESNSVIRIKSFFTNLSSSPISNLVFLLAVPKSMSLKLQPQSSNFMIGNAKDGISQEGTIENAPANPSKALKVKWKVNYSVNSTQAEETAVFTLPNV.

A VHS domain is found at 33–169 (ACRMSLAEPD…LLKYKGYAFP (137 aa)). Glycyl lysine isopeptide (Lys-Gly) (interchain with G-Cter in ubiquitin) cross-links involve residues K180 and K287. The region spanning 196 to 321 (EIAQAAKLEE…LLEKFNLLKN (126 aa)) is the GAT domain. A disordered region spans residues 358-378 (LDEAPSQGNNNTNGTGTPAAA). Positions 365–374 (GNNNTNGTGT) are enriched in low complexity. A GAE domain is found at 466 to 581 (TTTAPARTLV…TQAEETAVFT (116 aa)).

As to quaternary structure, binds to ARF1 and ARF2.

The protein resides in the golgi apparatus. The protein localises to the trans-Golgi network. Its function is as follows. May play a role in the regulation of membrane traffic through the trans-Golgi network. This is ADP-ribosylation factor-binding protein GGA2 (GGA2) from Saccharomyces cerevisiae (strain ATCC 204508 / S288c) (Baker's yeast).